Here is a 216-residue protein sequence, read N- to C-terminus: Large ribosomal subunit protein uL3 (216 aa).

Gln157 bears the N5-methylglutamine mark.

This sequence belongs to the universal ribosomal protein uL3 family. In terms of assembly, part of the 50S ribosomal subunit. Forms a cluster with proteins L14 and L19. In terms of processing, methylated by PrmB.

One of the primary rRNA binding proteins, it binds directly near the 3'-end of the 23S rRNA, where it nucleates assembly of the 50S subunit. This is Large ribosomal subunit protein uL3 from Xanthomonas oryzae pv. oryzae (strain MAFF 311018).